Consider the following 416-residue polypeptide: UDP-N-acetylglucosamine 1-carboxyvinyltransferase (416 aa).

22-23 (KN) is a binding site for phosphoenolpyruvate. Position 91 (Arg-91) interacts with UDP-N-acetyl-alpha-D-glucosamine. Cys-115 functions as the Proton donor in the catalytic mechanism. Position 115 is a 2-(S-cysteinyl)pyruvic acid O-phosphothioketal (Cys-115). UDP-N-acetyl-alpha-D-glucosamine contacts are provided by residues 120–124 (RPVDL), Asp-303, and Ile-325.

The protein belongs to the EPSP synthase family. MurA subfamily.

It is found in the cytoplasm. It catalyses the reaction phosphoenolpyruvate + UDP-N-acetyl-alpha-D-glucosamine = UDP-N-acetyl-3-O-(1-carboxyvinyl)-alpha-D-glucosamine + phosphate. Its pathway is cell wall biogenesis; peptidoglycan biosynthesis. Its function is as follows. Cell wall formation. Adds enolpyruvyl to UDP-N-acetylglucosamine. The sequence is that of UDP-N-acetylglucosamine 1-carboxyvinyltransferase from Oleidesulfovibrio alaskensis (strain ATCC BAA-1058 / DSM 17464 / G20) (Desulfovibrio alaskensis).